Reading from the N-terminus, the 350-residue chain is Biotin synthase (350 aa).

One can recognise a Radical SAM core domain in the interval 54-278 (REIQLSTLLS…TMPQSYVRLS (225 aa)). [4Fe-4S] cluster contacts are provided by Cys69, Cys73, and Cys76. Cys113, Cys144, Cys204, and Arg276 together coordinate [2Fe-2S] cluster.

This sequence belongs to the radical SAM superfamily. Biotin synthase family. In terms of assembly, homodimer. [4Fe-4S] cluster is required as a cofactor. The cofactor is [2Fe-2S] cluster.

It carries out the reaction (4R,5S)-dethiobiotin + (sulfur carrier)-SH + 2 reduced [2Fe-2S]-[ferredoxin] + 2 S-adenosyl-L-methionine = (sulfur carrier)-H + biotin + 2 5'-deoxyadenosine + 2 L-methionine + 2 oxidized [2Fe-2S]-[ferredoxin]. Its pathway is cofactor biosynthesis; biotin biosynthesis; biotin from 7,8-diaminononanoate: step 2/2. Its function is as follows. Catalyzes the conversion of dethiobiotin (DTB) to biotin by the insertion of a sulfur atom into dethiobiotin via a radical-based mechanism. The sequence is that of Biotin synthase from Neisseria meningitidis serogroup C (strain 053442).